Here is a 323-residue protein sequence, read N- to C-terminus: tRNA dimethylallyltransferase (323 aa).

13 to 20 is an ATP binding site; the sequence is GPTASGKT. Residue 15–20 coordinates substrate; sequence TASGKT. Interaction with substrate tRNA regions lie at residues 42 to 45, 166 to 170, 251 to 256, and 284 to 291; these read DSAL, QRIQR, RCVGYR, and KRQITWLR.

Belongs to the IPP transferase family. As to quaternary structure, monomer. Requires Mg(2+) as cofactor.

The enzyme catalyses adenosine(37) in tRNA + dimethylallyl diphosphate = N(6)-dimethylallyladenosine(37) in tRNA + diphosphate. Its function is as follows. Catalyzes the transfer of a dimethylallyl group onto the adenine at position 37 in tRNAs that read codons beginning with uridine, leading to the formation of N6-(dimethylallyl)adenosine (i(6)A). This is tRNA dimethylallyltransferase from Acidovorax sp. (strain JS42).